The primary structure comprises 323 residues: tRNA U34 carboxymethyltransferase (323 aa).

Carboxy-S-adenosyl-L-methionine-binding positions include Lys-91, Trp-105, Lys-110, Gly-130, 152–154 (DPT), 181–182 (IE), Met-196, Tyr-200, and Arg-315.

It belongs to the class I-like SAM-binding methyltransferase superfamily. CmoB family. In terms of assembly, homotetramer.

The enzyme catalyses carboxy-S-adenosyl-L-methionine + 5-hydroxyuridine(34) in tRNA = 5-carboxymethoxyuridine(34) in tRNA + S-adenosyl-L-homocysteine + H(+). Catalyzes carboxymethyl transfer from carboxy-S-adenosyl-L-methionine (Cx-SAM) to 5-hydroxyuridine (ho5U) to form 5-carboxymethoxyuridine (cmo5U) at position 34 in tRNAs. In Salmonella gallinarum (strain 287/91 / NCTC 13346), this protein is tRNA U34 carboxymethyltransferase.